The following is a 905-amino-acid chain: Translation initiation factor IF-2 (905 aa).

Disordered regions lie at residues 52 to 84, 116 to 230, and 269 to 318; these read QSHG…SKSV, AKKR…QKKT, and FEKE…FEKP. Over residues 65–84 the composition is skewed to polar residues; it reads KSKTTSTARVTGSSGKSKSV. Over residues 116-138 the composition is skewed to basic and acidic residues; sequence AKKRAEEEAKKREQVKKEAEERQ. Residues 165 to 178 show a composition bias toward low complexity; it reads VVVKKGSKAAAAAK. Composition is skewed to basic and acidic residues over residues 190–230 and 269–278; these read PKVE…QKKT and FEKERREIKR. Residues 406 to 575 enclose the tr-type G domain; the sequence is TRPPVVTIMG…NLQAELMELE (170 aa). The segment at 415–422 is G1; the sequence is GHVDHGKT. 415-422 provides a ligand contact to GTP; it reads GHVDHGKT. The segment at 440 to 444 is G2; sequence GITQH. The tract at residues 461–464 is G3; sequence DTPG. Residues 461-465 and 515-518 each bind GTP; these read DTPGH and NKMD. The tract at residues 515 to 518 is G4; that stretch reads NKMD. The segment at 551 to 553 is G5; that stretch reads SAK.

The protein belongs to the TRAFAC class translation factor GTPase superfamily. Classic translation factor GTPase family. IF-2 subfamily.

It is found in the cytoplasm. Its function is as follows. One of the essential components for the initiation of protein synthesis. Protects formylmethionyl-tRNA from spontaneous hydrolysis and promotes its binding to the 30S ribosomal subunits. Also involved in the hydrolysis of GTP during the formation of the 70S ribosomal complex. The chain is Translation initiation factor IF-2 from Psychrobacter sp. (strain PRwf-1).